Reading from the N-terminus, the 423-residue chain is Glucose-1-phosphate adenylyltransferase (423 aa).

Residues Y108, G173, 188 to 189 (EK), and S207 each bind alpha-D-glucose 1-phosphate.

This sequence belongs to the bacterial/plant glucose-1-phosphate adenylyltransferase family. As to quaternary structure, homotetramer.

It catalyses the reaction alpha-D-glucose 1-phosphate + ATP + H(+) = ADP-alpha-D-glucose + diphosphate. It functions in the pathway glycan biosynthesis; glycogen biosynthesis. Functionally, involved in the biosynthesis of ADP-glucose, a building block required for the elongation reactions to produce glycogen. Catalyzes the reaction between ATP and alpha-D-glucose 1-phosphate (G1P) to produce pyrophosphate and ADP-Glc. This Francisella tularensis subsp. holarctica (strain FTNF002-00 / FTA) protein is Glucose-1-phosphate adenylyltransferase.